A 148-amino-acid polypeptide reads, in one-letter code: Large ribosomal subunit protein uL22c (148 aa).

The protein belongs to the universal ribosomal protein uL22 family. Part of the 50S ribosomal subunit.

It is found in the plastid. It localises to the chloroplast. Its function is as follows. This protein binds specifically to 23S rRNA. Functionally, the globular domain of the protein is located near the polypeptide exit tunnel on the outside of the subunit, while an extended beta-hairpin is found that lines the wall of the exit tunnel in the center of the 70S ribosome. This is Large ribosomal subunit protein uL22c (rpl22) from Triticum aestivum (Wheat).